The primary structure comprises 619 residues: Cationic amino acid transporter 3 (619 aa).

Residues 1-36 (MLWQALRRFGQKLVRRRLLELGMGETRLARCLSTLD) are Cytoplasmic-facing. The chain crosses the membrane as a helical span at residues 37–57 (LVALGVGSTLGAGVYVLAGEV). Over 58–61 (AKEK) the chain is Extracellular. The helical transmembrane segment at 62–82 (AGPSIVICFLVAALSSVLAGL) threads the bilayer. Residues 83–107 (CYAEFGARVPGSGSAYLYSYVTVGE) lie on the Cytoplasmic side of the membrane. The chain crosses the membrane as a helical span at residues 108 to 128 (LWAFTTGWNLILSYVIGTASV). Topologically, residues 129 to 162 (ARAWSSAFDNLIGNHISQTLKGTILLNMPHVLAE) are extracellular. Residues 163 to 183 (YPDFFALALVLLLTGLLVLGA) traverse the membrane as a helical segment. Over 184–191 (NESGLVTK) the chain is Cytoplasmic. A helical membrane pass occupies residues 192–212 (VFTGMNLLVLGFVIISGFIKG). At 213–244 (ELRNWKLTKEDYCLTMSESNGTCSLDSMGSGG) the chain is on the extracellular side. N-linked (GlcNAc...) asparagine glycosylation occurs at Asn-232. The chain crosses the membrane as a helical span at residues 245 to 265 (FMPFGLEGILRGAATCFYAFV). At 266–285 (GFDCIATTGEEAQNPQRSIP) the chain is on the cytoplasmic side. A helical membrane pass occupies residues 286-306 (MGIVISLSICFLAYFGVSSAL). At 307 to 335 (TLMMPYYKLQPESPLPEAFTYVGWEPARY) the chain is on the extracellular side. A helical membrane pass occupies residues 336–356 (LVAIGSLCALSTSLLGSMFPM). Residues 357–382 (PRVIYAMAEDGLLFRVLARVHNGTHT) lie on the Cytoplasmic side of the membrane. A helical transmembrane segment spans residues 383–403 (PIVATVVSGVIAAFMAFLFEL). Residues 404 to 406 (TDL) lie on the Extracellular side of the membrane. The chain crosses the membrane as a helical span at residues 407–427 (VDLMSIGTLLAYSLVSICVLI). The Cytoplasmic segment spans residues 428 to 475 (LRYQPDQEMKNGEEEVELQEERTLEAEKLTVQALFCQVDSIPTLLSGR). Residues 476-496 (IVYVCSSLLAVLLTVLCLVLT) traverse the membrane as a helical segment. Residues 497 to 507 (WWTTPLHSGDP) are Extracellular-facing. Residues 508–528 (VWVTVVVLILGLILGISGVIW) form a helical membrane-spanning segment. At 529 to 540 (RQPQNRTPLHFK) the chain is on the cytoplasmic side. Residues 541 to 561 (VPVVPLLPLVSIFVNVYLMMQ) form a helical membrane-spanning segment. Residues 562–569 (MTADTWAR) lie on the Extracellular side of the membrane. Residues 570-590 (FGVWMLIGFAIYFGYGIQHSV) form a helical membrane-spanning segment. Residues 591 to 619 (EEVKNHQTLPKTRPQTIDLDLTTSCVHSI) lie on the Cytoplasmic side of the membrane. Thr-606 is modified (phosphothreonine). Ser-618 carries the post-translational modification Phosphoserine.

Belongs to the amino acid-polyamine-organocation (APC) superfamily. Cationic amino acid transporter (CAT) (TC 2.A.3.3) family. In terms of processing, N-glycosylated. As to expression, highly expressed in brain.

It localises to the cell membrane. The enzyme catalyses L-arginine(in) = L-arginine(out). The catalysed reaction is L-lysine(in) = L-lysine(out). It carries out the reaction L-ornithine(in) = L-ornithine(out). With respect to regulation, inhibited by high potassium ions-induced membrane depolarization. In terms of biological role, uniporter that mediates the uptake of cationic L-amino acids such as L-arginine, L-lysine and L-ornithine. The transport is sodium ions- and pH-independent, moderately trans-stimulated and is mediated by passive diffusion. This Rattus norvegicus (Rat) protein is Cationic amino acid transporter 3.